The primary structure comprises 695 residues: Lactotransferrin (695 aa).

The first 6 residues, 1–6, serve as a signal peptide directing secretion; sequence LGLCLA. 2 consecutive Transferrin-like domains span residues 12–339 and 351–680; these read VRWC…NLRE and VVWC…NLRR. 2 disulfides stabilise this stretch: Cys15/Cys51 and Cys25/Cys42. Asp66 serves as a coordination point for Fe(3+). Lys79 is a catalytic residue. Tyr98 provides a ligand contact to Fe(3+). 5 disulfide bridges follow: Cys121/Cys204, Cys163/Cys179, Cys166/Cys189, Cys176/Cys187, and Cys237/Cys251. The hydrogencarbonate site is built by Thr123, Arg127, Ala129, and Gly130. Asn143 carries N-linked (GlcNAc...) asparagine glycosylation. Tyr198 lines the Fe(3+) pocket. His259 provides a ligand contact to Fe(3+). The active-site Nucleophile is Ser265. Asn287 is a glycosylation site (N-linked (GlcNAc...) asparagine). 2 disulfide bridges follow: Cys354–Cys386 and Cys364–Cys377. Residue Asp401 coordinates Fe(3+). 8 disulfide bridges follow: Cys411–Cys690, Cys431–Cys653, Cys463–Cys538, Cys487–Cys681, Cys497–Cys511, Cys508–Cys521, Cys579–Cys593, and Cys631–Cys636. Pro436 contacts D-glucose. Tyr439 contributes to the Fe(3+) binding site. Residues Thr465, Arg469, Ala471, and Ala472 each coordinate hydrogencarbonate. N-linked (GlcNAc...) asparagine glycosylation is present at Asn482. Tyr532 is a binding site for Fe(3+). Asn600 contacts D-glucose. His601 contacts Fe(3+). Tyr666 is a D-glucose binding site.

This sequence belongs to the transferrin family. As to quaternary structure, monomer. Found in a complex with LTF, CLU, EPPIN and SEMG1. Found in a complex with MPO and LTF; interacts directly with CP, allows Fe(3+) incorporation into LTF and activation of CP ferroxidase activity. In terms of processing, poly-N-acetyllactosaminic carbohydrate moiety seems to be needed for TLR4 activation.

It localises to the secreted. It is found in the cytoplasmic granule. Transferrins are iron binding transport proteins which can bind two Fe(3+) ions in association with the binding of an anion, usually bicarbonate. Its function is as follows. Major iron-binding and multifunctional protein found in exocrine fluids such as breast milk and mucosal secretions. Has antimicrobial activity, which depends on the extracellular cation concentration. Antimicrobial properties include bacteriostasis, which is related to its ability to sequester free iron and thus inhibit microbial growth, as well as direct bactericidal properties leading to the release of lipopolysaccharides from the bacterial outer membrane. Can also prevent bacterial biofilm development in P.aeruginosa infection. Has weak antifungal activity against C.albicans. Has anabolic, differentiating and anti-apoptotic effects on osteoblasts and can also inhibit osteoclastogenesis, possibly playing a role in the regulation of bone growth. Promotes binding of species C adenoviruses to epithelial cells, promoting adenovirus infection. Can inhibit papillomavirus infections. Stimulates the TLR4 signaling pathway leading to NF-kappa-B activation and subsequent pro-inflammatory cytokine production while also interfering with the lipopolysaccharide (LPS)-stimulated TLR4 signaling. Inhibits neutrophil granulocyte migration to sites of apoptosis, when secreted by apoptotic cells. Stimulates VEGFA-mediated endothelial cell migration and proliferation. Binds heparin, chondroitin sulfate and possibly other glycosaminoglycans (GAGs). Also binds specifically to pneumococcal surface protein A (PspA), the lipid A portion of bacterial lipopolysaccharide (LPS), lysozyme and DNA. In terms of biological role, lactoferricin binds to the bacterial surface and is crucial for the bactericidal functions. Has some antiviral activity against papillomavirus infection. N-terminal region shows strong antifungal activity against C.albicans. Contains two BBXB heparin-binding consensus sequences that appear to form the predominate functional GAG-binding site. Functionally, the lactotransferrin transferrin-like domain 1 functions as a serine protease of the peptidase S60 family that cuts arginine rich regions. This function contributes to the antimicrobial activity. Shows a preferential cleavage at -Arg-Ser-Arg-Arg-|- and -Arg-Arg-Ser-Arg-|-, and of Z-Phe-Arg-|-aminomethylcoumarin sites. This Equus caballus (Horse) protein is Lactotransferrin (LTF).